We begin with the raw amino-acid sequence, 364 residues long: MSHNTFGHLFRVTTWGESHGPAIGCVVDGCPPGIHFTQAEIQADLDRRRPGQSRFVTQRREPDEVKILSGVMQDGETLVTTGTPISMLIENVDQRSKDYGEIAERYRPGHADYTYDAKYGVRDYRGGGRSSARETATRVAAGALARKIVPGMVVRGALISMGEKEIDRANWDWDFLHDPENPFFTPDPKSVSEFADYLDGVRKAGSSVGAVIEIVAEGVPAGLGAPLYGKLDQDICANLMSINAVKGVEIGIGFQAARIHGEENADEMRSGNDGYPRFLSNNAGGILGGISTGQPIIARFAVKPTSSILTPRRSIDRKGAEVEVVTKGRHDPCVGIRAVPIGEAMVACAIADHYLRHRGQTGKG.

NADP(+)-binding residues include Arg48 and Arg54. FMN is bound by residues 129–131 (RSS), 243–244 (NA), Gly288, 303–307 (KPTSS), and Arg329.

Belongs to the chorismate synthase family. Homotetramer. Requires FMNH2 as cofactor.

It catalyses the reaction 5-O-(1-carboxyvinyl)-3-phosphoshikimate = chorismate + phosphate. It functions in the pathway metabolic intermediate biosynthesis; chorismate biosynthesis; chorismate from D-erythrose 4-phosphate and phosphoenolpyruvate: step 7/7. Its function is as follows. Catalyzes the anti-1,4-elimination of the C-3 phosphate and the C-6 proR hydrogen from 5-enolpyruvylshikimate-3-phosphate (EPSP) to yield chorismate, which is the branch point compound that serves as the starting substrate for the three terminal pathways of aromatic amino acid biosynthesis. This reaction introduces a second double bond into the aromatic ring system. The sequence is that of Chorismate synthase from Chelativorans sp. (strain BNC1).